A 259-amino-acid polypeptide reads, in one-letter code: Complement factor D (259 aa).

The N-terminal stretch at 1–21 (MADRSLHLVVLILLGTALCAA) is a signal peptide. A propeptide spans 22-26 (QPRGR) (activation peptide). A Peptidase S1 domain is found at 27–254 (ILRGQEAPSH…YVAWIDGVMA (228 aa)). C52 and C68 form a disulfide bridge. Residues H67 and D115 each act as charge relay system in the active site. 3 disulfide bridges follow: C149-C215, C180-C196, and C205-C230. The Charge relay system role is filled by S209. The tract at residues 224 to 228 (TSGSR) is self-inhibitor loop.

It belongs to the peptidase S1 family. Post-translationally, CFD is activated by the removal of 5 residues at the N-terminus, named activation peptide, by the MASP-3 isoform of MASP1.

It localises to the secreted. It catalyses the reaction Selective cleavage of Arg-|-Lys bond in complement factor B when in complex with complement subcomponent C3b or with cobra venom factor.. Its activity is regulated as follows. Circulates in plasma in a mature but self-inhibited form. Activated by factor B (CFB), which displaces the self-inhibition loop. Associates with CFB complexed with complement C3b. Serine protease that initiates the alternative pathway of the complement system, a cascade of proteins that leads to phagocytosis and breakdown of pathogens and signaling that strengthens the adaptive immune system. In contrast to other complement pathways (classical, lectin and GZMK) that are directly activated by pathogens or antigen-antibody complexes, the alternative complement pathway is initiated by the spontaneous hydrolysis of complement C3. The alternative complement pathway acts as an amplification loop that enhances complement activation by mediating the formation of C3 and C5 convertases. Activated CFD cleaves factor B (CFB) when the latter is complexed with complement C3b, activating the C3 convertase of the alternative pathway. The chain is Complement factor D (CFD) from Bos taurus (Bovine).